The following is a 247-amino-acid chain: UPF0273 protein PH0284 (247 aa).

The 245-residue stretch at 3–247 folds into the KaiC domain; the sequence is RRVKTGIPGV…VLKRGKVLEL (245 aa). 30–37 contributes to the ATP binding site; that stretch reads GGPGTGKT.

This sequence belongs to the UPF0273 family.

The protein is UPF0273 protein PH0284 of Pyrococcus horikoshii (strain ATCC 700860 / DSM 12428 / JCM 9974 / NBRC 100139 / OT-3).